Here is a 475-residue protein sequence, read N- to C-terminus: ATP synthase subunit beta (475 aa).

An ATP-binding site is contributed by 156–163 (GGAGVGKT).

It belongs to the ATPase alpha/beta chains family. F-type ATPases have 2 components, CF(1) - the catalytic core - and CF(0) - the membrane proton channel. CF(1) has five subunits: alpha(3), beta(3), gamma(1), delta(1), epsilon(1). CF(0) has three main subunits: a(1), b(2) and c(9-12). The alpha and beta chains form an alternating ring which encloses part of the gamma chain. CF(1) is attached to CF(0) by a central stalk formed by the gamma and epsilon chains, while a peripheral stalk is formed by the delta and b chains.

It localises to the cell membrane. The enzyme catalyses ATP + H2O + 4 H(+)(in) = ADP + phosphate + 5 H(+)(out). Functionally, produces ATP from ADP in the presence of a proton gradient across the membrane. The catalytic sites are hosted primarily by the beta subunits. The polypeptide is ATP synthase subunit beta (Mycoplasma pneumoniae (strain ATCC 29342 / M129 / Subtype 1) (Mycoplasmoides pneumoniae)).